We begin with the raw amino-acid sequence, 2671 residues long: Stalled ribosome sensor GCN1 (2671 aa).

Ala-2 bears the N-acetylalanine mark. 10 HEAT repeats span residues 140-178 (NKLV…ENPG), 257-293 (EFKD…LDLS), 294-331 (QYAL…QCSD), 385-423 (CVAE…EVPK), 425-459 (LTDW…GDTL), 460-500 (LQAL…SKLS), 560-597 (SKVQ…SLGG), 599-636 (KLAN…MGKT), 700-732 (AFIT…SLSV), and 733-772 (LSPD…PAGE). Ser-729 bears the Phosphoserine mark. The residue at position 786 (Ser-786) is a Phosphoserine. Residues 804–865 (QIIEMELKEE…EAALGLLDAI (62 aa)) are a coiled coil. HEAT repeat units follow at residues 879-918 (VLVD…TLGT), 979-1016 (SLVF…HAQL), 1035-1072 (LPRV…SSSG), 1078-1115 (FAEQ…VLPS), 1155-1192 (DLQS…RYQR), 1210-1250 (YRPP…YLDS), 1251-1289 (SQVK…AHGK), 1290-1332 (ENVN…HLDK), 1335-1372 (PKVK…AVKE), 1374-1410 (AGGM…GLGI), 1413-1451 (LKQQ…MLGK), 1455-1492 (PYVV…NLSA), 1493-1530 (HGVK…CAPK), 1534-1571 (SCLP…VIRN), 1573-1609 (EILA…HFID), 1611-1648 (PSLA…LTDQ), 1653-1690 (PYLP…GMGE), 1692-1729 (CFED…GLGV), 1731-1769 (KLEK…TFGD), 1773-1810 (PYVG…MYAE), 1812-1848 (AIAL…HISG), 1921-1958 (EILP…KLGE), 1959-1996 (KILP…STSR), 2001-2038 (FFSE…TIGH), 2039-2074 (QALE…VKSR), 2076-2108 (VLPY…LTRH), 2111-2146 (VILP…VEDD), 2147-2184 (TGHR…RSKA), 2188-2225 (SHLR…KLDA), 2259-2296 (RGVT…LTSA), 2301-2338 (PSVV…GKVG), 2339-2380 (IALK…IHVK), 2382-2417 (DPLF…GAGS), 2422-2459 (AIRK…FLTD), 2546-2583 (QLPP…EPRP), 2588-2625 (QTIK…MRRG), and 2627-2661 (ELLQ…QADS). Residues 2260-2408 (GVTSILPVLR…GIRDTMLQAL (149 aa)) are RWDBD region. A Phosphoserine modification is found at Ser-2276.

Belongs to the GCN1 family. Interacts with EIF2AK4/GCN2; this interaction stimulates the EIF2AK4/GCN2 kinase activity and is impaired by IMPACT upon a variety of stress conditions, such as amino acid depletion, UV-C irradiation, proteasome inhibitor treatment and glucose deprivation. Interacts with IMPACT; this prevents the interaction of GCN1 with EIF2AK4/GCN2 and inhibits EIF2AK4/GCN2 kinase activity. Interacts with RNF14; interaction takes place following ribosome stalling and promotes recruitment of RNF14. Expressed in the hypothalamus, cortex and hippocampus.

Its subcellular location is the cytoplasm. Its function is as follows. Ribosome collision sensor that plays a key role in the RNF14-RNF25 translation quality control pathway, a pathway that takes place when a ribosome has stalled during translation, and which promotes ubiquitination and degradation of translation factors on stalled ribosomes. Directly binds to the ribosome and acts as a sentinel for colliding ribosomes: activated following ribosome stalling and promotes recruitment of RNF14, which directly ubiquitinates EEF1A1/eEF1A, leading to its degradation. In addition to EEF1A1/eEF1A, the RNF14-RNF25 translation quality control pathway mediates degradation of ETF1/eRF1 and ubiquitination of ribosomal protein. GCN1 also acts as a positive activator of the integrated stress response (ISR) by mediating activation of EIF2AK4/GCN2 in response to amino acid starvation. Interaction with EIF2AK4/GCN2 on translating ribosomes stimulates EIF2AK4/GCN2 kinase activity, leading to phosphorylation of eukaryotic translation initiation factor 2 (eIF-2-alpha/EIF2S1). EIF2S1/eIF-2-alpha phosphorylation converts EIF2S1/eIF-2-alpha into a global protein synthesis inhibitor, leading to a global attenuation of cap-dependent translation, and thus to a reduced overall utilization of amino acids, while concomitantly initiating the preferential translation of ISR-specific mRNAs, such as the transcriptional activator ATF4, and hence allowing ATF4-mediated reprogramming of amino acid biosynthetic gene expression to alleviate nutrient depletion. The sequence is that of Stalled ribosome sensor GCN1 from Mus musculus (Mouse).